Here is a 116-residue protein sequence, read N- to C-terminus: Vesicle-associated membrane protein 5 (116 aa).

Over 1–72 (MAGKELERCQ…RWENARCRIY (72 aa)) the chain is Cytoplasmic. The v-SNARE coiled-coil homology domain maps to 5-65 (ELERCQRQAD…KTLAQKKRWE (61 aa)). Phosphoserine is present on residues Ser41, Ser48, and Ser49. Residues 73-93 (MGLAVGIALLILLIVLLVIFL) form a helical; Anchor for type IV membrane protein membrane-spanning segment. At 94–116 (PQSSKGSSAPQVQDAGPASGPGE) the chain is on the vesicular side. The tract at residues 97 to 116 (SKGSSAPQVQDAGPASGPGE) is disordered.

Belongs to the synaptobrevin family.

The protein localises to the cell membrane. It is found in the endomembrane system. Its subcellular location is the golgi apparatus. The protein resides in the trans-Golgi network membrane. In terms of biological role, may participate in trafficking events that are associated with myogenesis, such as myoblast fusion and/or GLUT4 trafficking. The chain is Vesicle-associated membrane protein 5 (VAMP5) from Bos taurus (Bovine).